The chain runs to 389 residues: 26S proteasome regulatory subunit 10B (389 aa).

N6-acetyllysine is present on lysine 72. Position 174-181 (174-181) interacts with ATP; the sequence is GPPGTGKT. N6-acetyllysine is present on lysine 206. Serine 244 is modified (phosphoserine).

Belongs to the AAA ATPase family. In terms of assembly, component of the 19S proteasome regulatory particle complex. The 26S proteasome consists of a 20S core particle (CP) and two 19S regulatory subunits (RP). The regulatory particle is made of a lid composed of 9 subunits, a base containing 6 ATPases including PSMC6 and few additional components. Interacts with PAAF1.

The protein resides in the cytoplasm. Its subcellular location is the nucleus. Functionally, component of the 26S proteasome, a multiprotein complex involved in the ATP-dependent degradation of ubiquitinated proteins. This complex plays a key role in the maintenance of protein homeostasis by removing misfolded or damaged proteins, which could impair cellular functions, and by removing proteins whose functions are no longer required. Therefore, the proteasome participates in numerous cellular processes, including cell cycle progression, apoptosis, or DNA damage repair. PSMC6 belongs to the heterohexameric ring of AAA (ATPases associated with diverse cellular activities) proteins that unfolds ubiquitinated target proteins that are concurrently translocated into a proteolytic chamber and degraded into peptides. The polypeptide is 26S proteasome regulatory subunit 10B (PSMC6) (Homo sapiens (Human)).